A 101-amino-acid polypeptide reads, in one-letter code: Apolipoprotein C-II (101 aa).

The N-terminal stretch at 1 to 22 is a signal peptide; it reads MGTRCLLVLLLVLLVLRCDVQG. Residues 23 to 28 constitute a propeptide, removed in mature form; that stretch reads DDMARQ. Residues 66–74 are lipid binding; it reads AVDEKIRDM. Residues 78 to 101 form a lipoprotein lipase cofactor region; that stretch reads STAAVRIYTGILTDQILSMLSGDS.

This sequence belongs to the apolipoprotein C2 family. Proapolipoprotein C-II is synthesized as a sialic acid containing glycoprotein which is subsequently desialylated prior to its proteolytic processing. In terms of processing, proapolipoprotein C-II, the major form found in plasma undergoes proteolytic cleavage of its N-terminal hexapeptide to generate the mature form apolipoprotein C-II, which occurs as the minor form in plasma.

The protein localises to the secreted. In terms of biological role, component of chylomicrons, very low-density lipoproteins (VLDL), low-density lipoproteins (LDL), and high-density lipoproteins (HDL) in plasma. Plays an important role in lipoprotein metabolism as an activator of lipoprotein lipase, the enzyme which hydrolyzes the triacylglycerols on chylomicrons and VLDL. This is Apolipoprotein C-II (APOC2) from Acinonyx jubatus (Cheetah).